A 365-amino-acid polypeptide reads, in one-letter code: Membrane cofactor protein (365 aa).

A signal peptide spans 1 to 44 (MTAAPLMPDSTHPCRRRKSYTFFWCSLGVYAEALLFLLSHLSDA). Sushi domains lie at 45–106 (CELP…GCIK), 107–170 (VQCT…HCEK), 171–236 (IYCL…ECKV), and 237–296 (VKCP…KCLK). Topologically, residues 45 to 329 (CELPRPFEAM…GIFSQELDAW (285 aa)) are extracellular. Intrachain disulfides connect Cys109-Cys151, Cys137-Cys168, Cys173-Cys221, Cys202-Cys234, Cys239-Cys281, and Cys267-Cys294. N-linked (GlcNAc...) asparagine glycosylation is present at Asn181. Thr205 carries an O-linked (GalNAc...) threonine glycan. O-linked (GalNAc...) threonine glycosylation is found at Thr301 and Thr304. Asn310 is a glycosylation site (N-linked (GlcNAc...) asparagine). Thr312 is a glycosylation site (O-linked (GalNAc...) threonine). A helical transmembrane segment spans residues 330–350 (IIALIVITSIVGVFILCLIVL). Over 351-365 (RCFEHRKKTNVSAAR) the chain is Cytoplasmic.

Interacts with C3b. Interacts with C4b. Interacts with moesin/MSN. May be O-glycosylated. Post-translationally, N-glycosylated. Present only in testis (at protein level).

The protein localises to the cytoplasmic vesicle. It is found in the secretory vesicle. The protein resides in the acrosome inner membrane. It localises to the secreted. In terms of biological role, may be involved in the fusion of the spermatozoa with the oocyte during fertilization. The chain is Membrane cofactor protein (Cd46) from Mus musculus (Mouse).